The chain runs to 165 residues: NAD(P)H-quinone oxidoreductase subunit J, chloroplastic (165 aa).

Belongs to the complex I 30 kDa subunit family. As to quaternary structure, NDH is composed of at least 16 different subunits, 5 of which are encoded in the nucleus.

Its subcellular location is the plastid. It localises to the chloroplast thylakoid membrane. The catalysed reaction is a plastoquinone + NADH + (n+1) H(+)(in) = a plastoquinol + NAD(+) + n H(+)(out). It catalyses the reaction a plastoquinone + NADPH + (n+1) H(+)(in) = a plastoquinol + NADP(+) + n H(+)(out). Its function is as follows. NDH shuttles electrons from NAD(P)H:plastoquinone, via FMN and iron-sulfur (Fe-S) centers, to quinones in the photosynthetic chain and possibly in a chloroplast respiratory chain. The immediate electron acceptor for the enzyme in this species is believed to be plastoquinone. Couples the redox reaction to proton translocation, and thus conserves the redox energy in a proton gradient. The chain is NAD(P)H-quinone oxidoreductase subunit J, chloroplastic from Ipomoea purpurea (Common morning glory).